A 1071-amino-acid chain; its full sequence is ATP-dependent helicase/deoxyribonuclease subunit B (1071 aa).

Belongs to the helicase family. AddB/RexB type 2 subfamily. Heterodimer of AddA and RexB. It depends on Mg(2+) as a cofactor.

Functionally, the heterodimer acts as both an ATP-dependent DNA helicase and an ATP-dependent, dual-direction single-stranded exonuclease. Recognizes the chi site generating a DNA molecule suitable for the initiation of homologous recombination. This subunit has 5' -&gt; 3' nuclease activity but not helicase activity. The sequence is that of ATP-dependent helicase/deoxyribonuclease subunit B from Streptococcus pyogenes serotype M4 (strain MGAS10750).